The sequence spans 495 residues: Thiosulfate sulfurtransferase/rhodanese-like domain-containing protein 2 (495 aa).

Serine 268 bears the Phosphoserine mark. The 96-residue stretch at 300-395 folds into the Rhodanese domain; that stretch reads EQGNTIILDC…YLEEFPDGFY (96 aa). The active-site Cysteine persulfide intermediate is the cysteine 354.

The polypeptide is Thiosulfate sulfurtransferase/rhodanese-like domain-containing protein 2 (Tstd2) (Mus musculus (Mouse)).